A 544-amino-acid chain; its full sequence is GDP-mannose 4,6-dehydratase sdnI (544 aa).

NADP(+) contacts are provided by residues 16-21 (GITGQD), R41, 64-65 (DM), and 86-90 (LAAQS). Substrate is bound at residue S90. Catalysis depends on nucleophile residues E135 and Y157. Y157 serves as a coordination point for substrate. K161 provides a ligand contact to NADP(+). N186 contributes to the substrate binding site. Positions 187 and 192 each coordinate NADP(+). Substrate-binding positions include 192–200 (RGTTFVTRK), G219, R225, and 303–306 (RPVE). The interval 366–406 (GETTSAVNSSPSSTAGDTYKASDGWSTSGAEGSEQTECSSV) is disordered. Composition is skewed to polar residues over residues 368-381 (TTSA…STAG) and 389-404 (GWST…TECS).

The protein belongs to the NAD(P)-dependent epimerase/dehydratase family. GDP-mannose 4,6-dehydratase subfamily. NADP(+) is required as a cofactor.

It catalyses the reaction GDP-alpha-D-mannose = GDP-4-dehydro-alpha-D-rhamnose + H2O. Its pathway is antibiotic biosynthesis. In terms of biological role, GDP-mannose 4,6-dehydratase; part of the gene cluster that mediates the biosynthesis of sordarin and hypoxysordarin, glycoside antibiotics with a unique tetracyclic diterpene aglycone structure. First, the geranylgeranyl diphosphate synthase sdnC constructs GGDP from farnesyl diphosphate and isopentenyl diphosphate. The diterpene cyclase sdnA then catalyzes the cyclization of GGDP to afford cycloaraneosene. Cycloaraneosene is then hydroxylated four times by the putative cytochrome P450 monooxygenases sdnB, sdnE, sdnF and sdnH to give a hydroxylated cycloaraneosene derivative such as cycloaraneosene-8,9,13,19-tetraol. Although the order of the hydroxylations is unclear, at least C8, C9 and C13 of the cycloaraneosene skeleton are hydroxylated before the sordaricin formation. Dehydration of the 13-hydroxy group of the hydroxylated cycloaraneosene derivative might be catalyzed by an unassigned hypothetical protein such as sdnG and sdnP to construct the cyclopentadiene moiety. The FAD-dependent oxidoreductase sdnN is proposed to catalyze the oxidation at C9 of the hydroxylated cycloaraneosene derivative and also catalyze the Baeyer-Villiger oxidation to give the lactone intermediate. The presumed lactone intermediate would be hydrolyzed to give an acrolein moiety and a carboxylate moiety. Then, [4+2]cycloaddition would occur between the acrolein moiety and the cyclopentadiene moiety to give sordaricin. SdnN might also be involved in the [4+2]cycloaddition after the hypothesized oxidation to accommodate the oxidized product and prompt the [4+2]cycloaddition. GDP-6-deoxy-D-altrose may be biosynthesized from GDP-D-mannose by the putative GDP-mannose-4,6-dehydratase sdnI and the short-chain dehydrogenase sdnK. The glycosyltransferase sdnJ catalyzes the attachment of 6-deoxy-D-altrose onto the 19-hydroxy group of sordaricin to give 4'-O-demethylsordarin. The methyltransferase sdnD would complete the biosynthesis of sordarin. Sordarin can be further modified into hypoxysordarin. The unique acyl chain at the 3'-hydroxy group of hypoxysordarin would be constructed by an iterative type I PKS sdnO and the trans-acting polyketide methyltransferase sdnL. SdnL would be responsible for the introduction of an alpha-methyl group of the polyketide chain. Alternatively, the beta-lactamase-like protein sdnR might be responsible for the cleavage and transfer of the polyketide chain from the PKS sdnO to sordarin. Two putative cytochrome P450 monooxygenases, sdnQ and sdnT, might catalyze the epoxidations of the polyketide chain to complete the biosynthesis of hypoxysordarin. Transcriptional regulators sdnM and sdnS are presumably encoded for the transcriptional regulation of the expression of the sdn gene cluster. This chain is GDP-mannose 4,6-dehydratase sdnI, found in Sordaria araneosa (Pleurage araneosa).